The following is a 679-amino-acid chain: Glycine--tRNA ligase beta subunit (679 aa).

Belongs to the class-II aminoacyl-tRNA synthetase family. Tetramer of two alpha and two beta subunits.

The protein resides in the cytoplasm. The catalysed reaction is tRNA(Gly) + glycine + ATP = glycyl-tRNA(Gly) + AMP + diphosphate. In Bacillus subtilis (strain 168), this protein is Glycine--tRNA ligase beta subunit (glyS).